The primary structure comprises 265 residues: Orotidine 5'-phosphate decarboxylase (265 aa).

Substrate is bound by residues D37, 59-61 (KTH), 91-100 (DRKFADIGNT), Y217, and R236. The active-site Proton donor is the K93.

This sequence belongs to the OMP decarboxylase family.

It carries out the reaction orotidine 5'-phosphate + H(+) = UMP + CO2. It functions in the pathway pyrimidine metabolism; UMP biosynthesis via de novo pathway; UMP from orotate: step 2/2. The chain is Orotidine 5'-phosphate decarboxylase (URA3) from Saccharomycopsis fibuligera (Yeast).